Here is a 68-residue protein sequence, read N- to C-terminus: DNA-directed RNA polymerase subunit omega (68 aa).

It belongs to the RNA polymerase subunit omega family. As to quaternary structure, the RNAP catalytic core consists of 2 alpha, 1 beta, 1 beta' and 1 omega subunit. When a sigma factor is associated with the core the holoenzyme is formed, which can initiate transcription.

The enzyme catalyses RNA(n) + a ribonucleoside 5'-triphosphate = RNA(n+1) + diphosphate. Functionally, promotes RNA polymerase assembly. Latches the N- and C-terminal regions of the beta' subunit thereby facilitating its interaction with the beta and alpha subunits. The sequence is that of DNA-directed RNA polymerase subunit omega from Neisseria gonorrhoeae (strain NCCP11945).